The following is a 347-amino-acid chain: Dual specificity mitogen-activated protein kinase kinase 3 (347 aa).

At methionine 1 the chain carries N-acetylmethionine. Residues 1-11 are compositionally biased toward pro residues; sequence MESPAASPPAS. The interval 1–45 is disordered; it reads MESPAASPPASLPQTKGKSKRKKDLRISCVSKPPVSNPTPPRNLD. Position 3 is a phosphoserine (serine 3). The Protein kinase domain occupies 64 to 325; that stretch reads LVTISELGRG…YLELMEHPFF (262 aa). Residues 70-78 and lysine 93 each bind ATP; that span reads LGRGAYGVV. Aspartate 190 serves as the catalytic Proton acceptor. Serine 218 carries the post-translational modification Phosphoserine. The residue at position 222 (threonine 222) is a Phosphothreonine.

This sequence belongs to the protein kinase superfamily. STE Ser/Thr protein kinase family. MAP kinase kinase subfamily. Component of a signaling complex containing at least AKAP13, PKN1, MAPK14, ZAK and MAP2K3. Within this complex, AKAP13 interacts directly with PKN1, which in turn recruits MAPK14, MAP2K3 and ZAK. Binds to DYRK1B/MIRK and increases its kinase activity. Part of a complex with MAP3K3, RAC1 and CCM2. Interacts with ARRB1. In terms of processing, autophosphorylated. Phosphorylation on Ser-218 and Thr-222 by MAP kinase kinase kinases positively regulates the kinase activity. Phosphorylated by TAOK2.

The enzyme catalyses L-seryl-[protein] + ATP = O-phospho-L-seryl-[protein] + ADP + H(+). It carries out the reaction L-threonyl-[protein] + ATP = O-phospho-L-threonyl-[protein] + ADP + H(+). The catalysed reaction is L-tyrosyl-[protein] + ATP = O-phospho-L-tyrosyl-[protein] + ADP + H(+). With respect to regulation, activated by dual phosphorylation on Ser-218 and Thr-222. Its function is as follows. Dual specificity kinase. Is activated by cytokines and environmental stress in vivo. Catalyzes the concomitant phosphorylation of a threonine and a tyrosine residue in the MAP kinase p38. Part of a signaling cascade that begins with the activation of the adrenergic receptor ADRA1B and leads to the activation of MAPK14. The sequence is that of Dual specificity mitogen-activated protein kinase kinase 3 (Map2k3) from Mus musculus (Mouse).